Here is a 434-residue protein sequence, read N- to C-terminus: ATP-dependent RNA helicase RhlB (434 aa).

The Q motif signature appears at 9–37 (QKFADLGLEPQVLDGLNAKGFINCTPIQA). The 180-residue stretch at 40-219 (LPVLLAGQDI…FEHMQEPEHV (180 aa)) folds into the Helicase ATP-binding domain. Residue 53–60 (AQTGTGKT) coordinates ATP. The short motif at 165–168 (DEAD) is the DEAD box element. The Helicase C-terminal domain occupies 245 to 390 (ALLQTLIEEE…QSDYDTSALL (146 aa)). The tract at residues 394-434 (PAPIRLQRRPPQNRRNGSNNGQRQSGNRKHSRPRPPRSPQA) is disordered. The span at 406 to 418 (NRRNGSNNGQRQS) shows a compositional bias: low complexity. The span at 419–428 (GNRKHSRPRP) shows a compositional bias: basic residues.

It belongs to the DEAD box helicase family. RhlB subfamily. As to quaternary structure, component of the RNA degradosome, which is a multiprotein complex involved in RNA processing and mRNA degradation.

It localises to the cytoplasm. It catalyses the reaction ATP + H2O = ADP + phosphate + H(+). Functionally, DEAD-box RNA helicase involved in RNA degradation. Has RNA-dependent ATPase activity and unwinds double-stranded RNA. This Aliivibrio salmonicida (strain LFI1238) (Vibrio salmonicida (strain LFI1238)) protein is ATP-dependent RNA helicase RhlB.